The chain runs to 156 residues: Protein LlR18B (156 aa).

Trans-zeatin is bound by residues D8 and D28. Residues P32 and I38 each contribute to the Ca(2+) site. Positions 54, 133, and 136 each coordinate trans-zeatin.

Belongs to the BetVI family. As to expression, ubiquitous, with higher levels in roots.

Its subcellular location is the cytoplasm. It is found in the cytosol. Its function is as follows. Class II ribonuclease (RNase), with low activity on single-strand RNA. Binds to cytokinins. Interacts with melatonin. This Lupinus luteus (European yellow lupine) protein is Protein LlR18B (LLR18B).